Here is a 392-residue protein sequence, read N- to C-terminus: L-rhamnonate dehydratase (392 aa).

Substrate-binding residues include H22 and R48. D214, E240, and E268 together coordinate Mg(2+). Residue H318 is the Proton acceptor of the active site. A substrate-binding site is contributed by E338.

This sequence belongs to the mandelate racemase/muconate lactonizing enzyme family. RhamD subfamily. As to quaternary structure, homooctamer; tetramer of dimers. Mg(2+) is required as a cofactor.

The catalysed reaction is L-rhamnonate = 2-dehydro-3-deoxy-L-rhamnonate + H2O. In terms of biological role, catalyzes the dehydration of L-rhamnonate to 2-keto-3-deoxy-L-rhamnonate (KDR). This Paraburkholderia phymatum (strain DSM 17167 / CIP 108236 / LMG 21445 / STM815) (Burkholderia phymatum) protein is L-rhamnonate dehydratase.